Reading from the N-terminus, the 273-residue chain is Large ribosomal subunit protein uL2 (273 aa).

Disordered regions lie at residues 35-54 (DKKD…TRHI) and 222-273 (GMAM…RRNK). Over residues 229–239 (DHPHGGGEGRN) the composition is skewed to basic and acidic residues. A compositionally biased stretch (basic residues) spans 253–273 (KGFKTRKNKRTDKYIVRRRNK).

Belongs to the universal ribosomal protein uL2 family. In terms of assembly, part of the 50S ribosomal subunit. Forms a bridge to the 30S subunit in the 70S ribosome.

In terms of biological role, one of the primary rRNA binding proteins. Required for association of the 30S and 50S subunits to form the 70S ribosome, for tRNA binding and peptide bond formation. It has been suggested to have peptidyltransferase activity; this is somewhat controversial. Makes several contacts with the 16S rRNA in the 70S ribosome. This Aeromonas hydrophila subsp. hydrophila (strain ATCC 7966 / DSM 30187 / BCRC 13018 / CCUG 14551 / JCM 1027 / KCTC 2358 / NCIMB 9240 / NCTC 8049) protein is Large ribosomal subunit protein uL2.